The chain runs to 156 residues: Type IV major fimbrial protein FimA (156 aa).

Residues 1-7 (MKSLQKG) constitute a propeptide, leader sequence. Phe8 carries the post-translational modification N-methylphenylalanine. A helical membrane pass occupies residues 8-28 (FTLIELMIVVAIIGILAAIAI). 2 disulfide bridges follow: Cys57–Cys67 and Cys140–Cys153.

The protein belongs to the N-Me-Phe pilin family. In terms of assembly, the pili are polar flexible filaments of about 5.4 nanometers diameter and 2.5 micrometers average length; they consist of only a single polypeptide chain arranged in a helical configuration of five subunits per turn in the assembled pilus.

It is found in the fimbrium. Its subcellular location is the membrane. Its function is as follows. Major component of the type IV fimbriae that plays an essential role in twitching motility, natural transformation, and protease secretion. The sequence is that of Type IV major fimbrial protein FimA (fimA) from Dichelobacter nodosus (Bacteroides nodosus).